The sequence spans 227 residues: Endonuclease V (227 aa).

Mg(2+) is bound by residues D46 and D114.

Belongs to the endonuclease V family. It depends on Mg(2+) as a cofactor.

It localises to the cytoplasm. The enzyme catalyses Endonucleolytic cleavage at apurinic or apyrimidinic sites to products with a 5'-phosphate.. Its function is as follows. DNA repair enzyme involved in the repair of deaminated bases. Selectively cleaves double-stranded DNA at the second phosphodiester bond 3' to a deoxyinosine leaving behind the intact lesion on the nicked DNA. The chain is Endonuclease V from Alkalilimnicola ehrlichii (strain ATCC BAA-1101 / DSM 17681 / MLHE-1).